A 516-amino-acid polypeptide reads, in one-letter code: Putative fatty acyl-CoA reductase CG8306 (516 aa).

3 helical membrane-spanning segments follow: residues 356–376 (WVFR…LDLV), 471–491 (ILLG…FKLI), and 496–516 (GIST…FGLL).

Belongs to the fatty acyl-CoA reductase family.

The protein resides in the membrane. It catalyses the reaction a long-chain fatty acyl-CoA + 2 NADPH + 2 H(+) = a long-chain primary fatty alcohol + 2 NADP(+) + CoA. Its function is as follows. Catalyzes the reduction of C16 or C18 fatty acyl-CoA to fatty alcohols. The polypeptide is Putative fatty acyl-CoA reductase CG8306 (Drosophila melanogaster (Fruit fly)).